The chain runs to 585 residues: S-antigen protein (585 aa).

The signal sequence occupies residues Met1–Gly23. The segment at Asn51–Met585 is disordered. Over residues Asp59–Asn85 the composition is skewed to acidic residues. The span at Gln96 to Val113 shows a compositional bias: basic and acidic residues. Tandem repeats lie at residues Glu102–Arg109, Glu110–Gly117, Glu118–Gly125, Glu126–Arg133, Glu134–Gly141, Glu142–Arg149, Glu150–Gly157, Glu158–Arg165, Glu166–Gly173, Glu174–Arg181, Glu182–Gly189, Glu190–Arg197, Glu198–Arg205, Glu206–Gly213, Glu214–Arg221, Glu222–Arg229, Glu230–Gly237, Glu238–Arg245, Glu246–Gly253, Glu254–Arg261, Glu262–Gly269, Glu270–Arg277, Glu278–Arg285, Glu286–Arg293, Glu294–Gly301, Glu302–Arg309, Glu310–Gly317, Glu318–Arg325, Glu326–Arg333, Glu334–Gly341, Glu342–Arg349, Glu350–Gly357, Glu358–Arg365, Glu366–Arg373, Glu374–Arg381, Glu382–Arg389, Glu390–Gly397, Glu398–Arg405, Glu406–Arg413, Glu414–Gly421, Glu422–Arg429, Glu430–Gly437, Glu438–Arg445, Glu446–Arg453, Glu454–Arg461, Glu462–Gly469, Glu470–Gly477, Glu478–Arg485, Glu486–Gly493, Glu494–Arg501, Glu502–Gly509, Glu510–Arg517, Glu518–Gly525, Glu526–Arg533, Glu534–Arg541, and Glu542–Arg549. Residues Glu102–Arg549 form a 56 X 8 AA tandem repeats of E-D-[EK]-V-S-N-G-[RG] region. A compositionally biased stretch (acidic residues) spans Gly117–Val129. Basic and acidic residues-rich tracts occupy residues Ser194 to Val209 and Ser218 to Val233. Basic and acidic residues predominate over residues Ser274 to Val297. The segment covering Ser322 to Val337 has biased composition (basic and acidic residues). 2 stretches are compositionally biased toward basic and acidic residues: residues Ser362–Val393 and Ser402–Val417. Over residues Ser442–Val465 the composition is skewed to basic and acidic residues. A compositionally biased stretch (acidic residues) spans Gly469–Val481. Composition is skewed to basic and acidic residues over residues Ser530 to Gly553 and Glu560 to Thr569. The span at Asn576 to Met585 shows a compositional bias: low complexity.

It localises to the parasitophorous vacuole. S antigens are soluble heat-stable proteins present in the sera of some infected individuals. This Plasmodium falciparum (isolate 3D7) protein is S-antigen protein.